A 573-amino-acid polypeptide reads, in one-letter code: 60 kDa heat shock protein, mitochondrial (573 aa).

The N-terminal 26 residues, M1–Y26, are a transit peptide targeting the mitochondrion. K31 is subject to N6-succinyllysine. Phosphoserine is present on residues S67 and S70. ATP is bound at residue K75. The residue at position 75 (K75) is an N6-acetyllysine. The residue at position 82 (K82) is an N6-acetyllysine; alternate. K82 bears the N6-succinyllysine; alternate mark. K87 bears the N6-acetyllysine mark. A Phosphotyrosine modification is found at Y90. K91 carries the N6-acetyllysine modification. D111–T115 serves as a coordination point for ATP. An N6-acetyllysine; alternate modification is found at K125. The residue at position 125 (K125) is an N6-succinyllysine; alternate. K130 is modified (N6-acetyllysine). K133 is subject to N6-acetyllysine; alternate. K133 is modified (N6-succinyllysine; alternate). Residue K133 is modified to N6-malonyllysine; alternate. N6-acetyllysine is present on K156. N6-acetyllysine; alternate occurs at positions 191, 202, 205, 218, and 236. N6-succinyllysine; alternate is present on residues K191, K202, K205, K218, and K236. K249 bears the N6-acetyllysine mark. K250 is modified (N6-acetyllysine; alternate). K250 is subject to N6-succinyllysine; alternate. N6-acetyllysine is present on residues K269 and K292. Residue K301 is modified to N6-succinyllysine. N6-acetyllysine is present on K314. The residue at position 352 (K352) is an N6-acetyllysine; alternate. N6-succinyllysine; alternate is present on K352. N6-acetyllysine is present on K389. K396 is modified (N6-acetyllysine; alternate). N6-succinyllysine; alternate is present on K396. S410 carries the post-translational modification Phosphoserine. ATP is bound at residue G440. K469 carries the post-translational modification N6-acetyllysine. An N6-acetyllysine; alternate modification is found at K481. K481 carries the post-translational modification N6-succinyllysine; alternate. Phosphoserine is present on S488. D520 is a binding site for ATP. A Glycyl lysine isopeptide (Lys-Gly) (interchain with G-Cter in SUMO2) cross-link involves residue K551.

It belongs to the chaperonin (HSP60) family. As to quaternary structure, homoheptamer arranged in a ring structure. The functional units of these chaperonins consist of heptameric rings of the large subunit Hsp60, which function as a back-to-back double ring. Interacts with 2 heptameric Hsp10 rings to form the symmetrical football complex. Interacts with HRAS. Interacts with ATAD3A. Interacts with ETFBKMT and EEF1AKMT3. Interacts with MFHAS1.

Its subcellular location is the mitochondrion matrix. The catalysed reaction is ATP + H2O + a folded polypeptide = ADP + phosphate + an unfolded polypeptide.. Functionally, chaperonin implicated in mitochondrial protein import and macromolecular assembly. Together with Hsp10, facilitates the correct folding of imported proteins. May also prevent misfolding and promote the refolding and proper assembly of unfolded polypeptides generated under stress conditions in the mitochondrial matrix. The functional units of these chaperonins consist of heptameric rings of the large subunit Hsp60, which function as a back-to-back double ring. In a cyclic reaction, Hsp60 ring complexes bind one unfolded substrate protein per ring, followed by the binding of ATP and association with 2 heptameric rings of the co-chaperonin Hsp10. This leads to sequestration of the substrate protein in the inner cavity of Hsp60 where, for a certain period of time, it can fold undisturbed by other cell components. Synchronous hydrolysis of ATP in all Hsp60 subunits results in the dissociation of the chaperonin rings and the release of ADP and the folded substrate protein. In Pongo abelii (Sumatran orangutan), this protein is 60 kDa heat shock protein, mitochondrial (HSPD1).